The chain runs to 309 residues: Sulfate adenylyltransferase subunit 2 (309 aa).

Belongs to the PAPS reductase family. CysD subfamily. Heterodimer composed of CysD, the smaller subunit, and CysN.

It catalyses the reaction sulfate + ATP + H(+) = adenosine 5'-phosphosulfate + diphosphate. It participates in sulfur metabolism; hydrogen sulfide biosynthesis; sulfite from sulfate: step 1/3. Its function is as follows. With CysN forms the ATP sulfurylase (ATPS) that catalyzes the adenylation of sulfate producing adenosine 5'-phosphosulfate (APS) and diphosphate, the first enzymatic step in sulfur assimilation pathway. APS synthesis involves the formation of a high-energy phosphoric-sulfuric acid anhydride bond driven by GTP hydrolysis by CysN coupled to ATP hydrolysis by CysD. This is Sulfate adenylyltransferase subunit 2 from Methylorubrum populi (strain ATCC BAA-705 / NCIMB 13946 / BJ001) (Methylobacterium populi).